The chain runs to 224 residues: Small ribosomal subunit protein uS3 (224 aa).

Residues 39–107 (IREFLKKKPS…DVWVEIAEVK (69 aa)) form the KH type-2 domain.

It belongs to the universal ribosomal protein uS3 family. As to quaternary structure, part of the 30S ribosomal subunit. Forms a tight complex with proteins S10 and S14.

Its function is as follows. Binds the lower part of the 30S subunit head. Binds mRNA in the 70S ribosome, positioning it for translation. This is Small ribosomal subunit protein uS3 from Chlamydia trachomatis serovar A (strain ATCC VR-571B / DSM 19440 / HAR-13).